The following is a 215-amino-acid chain: Thymidylate kinase (215 aa).

ATP is bound at residue 10 to 17 (GGEGVGKT).

Belongs to the thymidylate kinase family.

The enzyme catalyses dTMP + ATP = dTDP + ADP. Functionally, phosphorylation of dTMP to form dTDP in both de novo and salvage pathways of dTTP synthesis. The protein is Thymidylate kinase of Bartonella henselae (strain ATCC 49882 / DSM 28221 / CCUG 30454 / Houston 1) (Rochalimaea henselae).